The primary structure comprises 193 residues: Potassium-transporting ATPase KdpC subunit (193 aa).

Residues 7–27 (PLIVVFVVLVAVTGLAYPAVM) form a helical membrane-spanning segment.

The protein belongs to the KdpC family. In terms of assembly, the system is composed of three essential subunits: KdpA, KdpB and KdpC.

It is found in the cell inner membrane. In terms of biological role, part of the high-affinity ATP-driven potassium transport (or Kdp) system, which catalyzes the hydrolysis of ATP coupled with the electrogenic transport of potassium into the cytoplasm. This subunit acts as a catalytic chaperone that increases the ATP-binding affinity of the ATP-hydrolyzing subunit KdpB by the formation of a transient KdpB/KdpC/ATP ternary complex. This Burkholderia mallei (strain NCTC 10247) protein is Potassium-transporting ATPase KdpC subunit.